Here is a 368-residue protein sequence, read N- to C-terminus: Nuclease EXOG, mitochondrial (368 aa).

The N-terminal 41 residues, 1 to 41 (MAIKSIASRLRGSRRFLSGFVAGAVVGAAGAGLAALQFFRS), are a transit peptide targeting the mitochondrion. Residue histidine 140 is the Proton acceptor of the active site. Asparagine 171 serves as a coordination point for a divalent metal cation.

It belongs to the DNA/RNA non-specific endonuclease family. Homodimer. A divalent metal cation is required as a cofactor. Ubiquitous.

It is found in the mitochondrion inner membrane. Its function is as follows. Endo/exonuclease with nicking activity towards supercoiled DNA, a preference for single-stranded DNA and 5'-3' exonuclease activity. The sequence is that of Nuclease EXOG, mitochondrial (EXOG) from Homo sapiens (Human).